A 239-amino-acid polypeptide reads, in one-letter code: Ribonuclease PH (239 aa).

Residues Arg-87 and 125 to 127 each bind phosphate; that span reads GTR.

Belongs to the RNase PH family. As to quaternary structure, homohexameric ring arranged as a trimer of dimers.

The enzyme catalyses tRNA(n+1) + phosphate = tRNA(n) + a ribonucleoside 5'-diphosphate. Its function is as follows. Phosphorolytic 3'-5' exoribonuclease that plays an important role in tRNA 3'-end maturation. Removes nucleotide residues following the 3'-CCA terminus of tRNAs; can also add nucleotides to the ends of RNA molecules by using nucleoside diphosphates as substrates, but this may not be physiologically important. Probably plays a role in initiation of 16S rRNA degradation (leading to ribosome degradation) during starvation. In Dehalococcoides mccartyi (strain ATCC BAA-2266 / KCTC 15142 / 195) (Dehalococcoides ethenogenes (strain 195)), this protein is Ribonuclease PH.